Consider the following 91-residue polypeptide: Small ribosomal subunit protein bS16 (91 aa).

This sequence belongs to the bacterial ribosomal protein bS16 family.

This Levilactobacillus brevis (strain ATCC 367 / BCRC 12310 / CIP 105137 / JCM 1170 / LMG 11437 / NCIMB 947 / NCTC 947) (Lactobacillus brevis) protein is Small ribosomal subunit protein bS16.